The primary structure comprises 321 residues: Phosphatidylglycerol phospholipase C (321 aa).

The GP-PDE domain maps to Val2–Cys251. A helical; Anchor for type IV membrane protein membrane pass occupies residues Trp297–Leu315.

It belongs to the glycerophosphoryl diester phosphodiesterase family.

Its subcellular location is the mitochondrion membrane. The protein localises to the lipid droplet. The enzyme catalyses a 1,2-diacyl-sn-glycero-3-phospho-(1'-sn-glycerol) + H2O = sn-glycerol 3-phosphate + a 1,2-diacyl-sn-glycerol + H(+). Its function is as follows. Phosphatidylglycerol phospholipase required for the removal of excess phosphatidylglycerol (PG) via a phospholipase C-type degradation mechanism. The sequence is that of Phosphatidylglycerol phospholipase C (PGC1) from Saccharomyces cerevisiae (strain ATCC 204508 / S288c) (Baker's yeast).